A 174-amino-acid polypeptide reads, in one-letter code: uncharacterized protein (174 aa).

This is an uncharacterized protein from Archaeoglobus fulgidus (strain ATCC 49558 / DSM 4304 / JCM 9628 / NBRC 100126 / VC-16).